Consider the following 214-residue polypeptide: Pyridoxine/pyridoxamine 5'-phosphate oxidase (214 aa).

Residues 9–12 and Lys67 each bind substrate; that span reads RKDY. Residues 62-67, 77-78, Arg83, Lys84, and Gln106 each bind FMN; these read RMVLLK and FT. Tyr124, Arg128, and Ser132 together coordinate substrate. FMN-binding positions include 141–142 and Trp186; that span reads QS. 192 to 194 provides a ligand contact to substrate; it reads RLH. An FMN-binding site is contributed by Arg196.

This sequence belongs to the pyridoxamine 5'-phosphate oxidase family. In terms of assembly, homodimer. Requires FMN as cofactor.

It catalyses the reaction pyridoxamine 5'-phosphate + O2 + H2O = pyridoxal 5'-phosphate + H2O2 + NH4(+). The enzyme catalyses pyridoxine 5'-phosphate + O2 = pyridoxal 5'-phosphate + H2O2. Its pathway is cofactor metabolism; pyridoxal 5'-phosphate salvage; pyridoxal 5'-phosphate from pyridoxamine 5'-phosphate: step 1/1. It participates in cofactor metabolism; pyridoxal 5'-phosphate salvage; pyridoxal 5'-phosphate from pyridoxine 5'-phosphate: step 1/1. Catalyzes the oxidation of either pyridoxine 5'-phosphate (PNP) or pyridoxamine 5'-phosphate (PMP) into pyridoxal 5'-phosphate (PLP). The sequence is that of Pyridoxine/pyridoxamine 5'-phosphate oxidase from Nostoc punctiforme (strain ATCC 29133 / PCC 73102).